The primary structure comprises 431 residues: uncharacterized protein (431 aa).

This is an uncharacterized protein from Acanthamoeba polyphaga (Amoeba).